The following is a 350-amino-acid chain: Membrane progestin receptor alpha (350 aa).

Over 1–80 (MATMVAQKLS…HNEAVNVWTH (80 aa)) the chain is Cytoplasmic. Residues 81-101 (LLAALVLLLRLAIFVGTVDFW) traverse the membrane as a helical segment. Over 102–105 (GDPH) the chain is Extracellular. A helical membrane pass occupies residues 106–126 (ALPLFIIVLASFTYLSLSALA). Residues 127–139 (HLLQAKSEFWHYS) lie on the Cytoplasmic side of the membrane. A helical membrane pass occupies residues 140 to 160 (FFFLDYVGVAVYQFGSALAHF). Residues 161–165 (YYAIE) lie on the Extracellular side of the membrane. A helical membrane pass occupies residues 166-186 (PAWHAQVQTIFLPMAAFLAWL). Topologically, residues 187–239 (SCTGSCYNKYIQKPGLLGRTCQEVPSALAYALDISPVAHRILASPEPATDDPA) are cytoplasmic. The chain crosses the membrane as a helical span at residues 240 to 260 (LLYHKCQVVFFLLAAAFFSAF). Residues 261-278 (MPERWFPGSCHIFGQGHQ) are Extracellular-facing. Residues 279-299 (LFHVFLVLCTLAQLEAVALDY) form a helical membrane-spanning segment. The Cytoplasmic segment spans residues 300–318 (EARRPIYEPLHTRWPHNFS). A helical transmembrane segment spans residues 319–339 (GLFLLTVGSSILTAFLLSQLV). The Extracellular portion of the chain corresponds to 340–350 (RRKLDLDRKTQ).

The protein belongs to the ADIPOR family.

It is found in the cell membrane. In terms of biological role, plasma membrane progesterone (P4) receptor coupled to G proteins. Seems to act through a G(i) mediated pathway. May be involved in oocyte maturation. Involved in neurosteroid inhibition of apoptosis. Also binds dehydroepiandrosterone (DHEA), pregnanolone, pregnenolone and allopregnanolone. The chain is Membrane progestin receptor alpha (PAQR7) from Sus scrofa (Pig).